We begin with the raw amino-acid sequence, 269 residues long: Trans-aconitate 2-methyltransferase (269 aa).

Belongs to the methyltransferase superfamily. Tam family.

Its subcellular location is the cytoplasm. It catalyses the reaction trans-aconitate + S-adenosyl-L-methionine = (E)-3-(methoxycarbonyl)pent-2-enedioate + S-adenosyl-L-homocysteine. Catalyzes the S-adenosylmethionine monomethyl esterification of trans-aconitate. This Streptomyces avermitilis (strain ATCC 31267 / DSM 46492 / JCM 5070 / NBRC 14893 / NCIMB 12804 / NRRL 8165 / MA-4680) protein is Trans-aconitate 2-methyltransferase.